We begin with the raw amino-acid sequence, 169 residues long: Small ribosomal subunit protein uS5 (169 aa).

Residues 14 to 77 (LQEKVVEVRR…EDAKKNLIVV (64 aa)) form the S5 DRBM domain.

This sequence belongs to the universal ribosomal protein uS5 family. Part of the 30S ribosomal subunit. Contacts proteins S4 and S8.

Functionally, with S4 and S12 plays an important role in translational accuracy. Its function is as follows. Located at the back of the 30S subunit body where it stabilizes the conformation of the head with respect to the body. The chain is Small ribosomal subunit protein uS5 from Clostridioides difficile (strain 630) (Peptoclostridium difficile).